Here is a 217-residue protein sequence, read N- to C-terminus: Magnetosome protein MamA (217 aa).

TPR repeat units follow at residues 12 to 44, 46 to 79, 80 to 113, 114 to 147, 148 to 181, and 182 to 215; these read VTLYAHYGLSVAKKLGMNMVDAFRAAFSVNDDI, QVYYRDKGISHAKAGRYSQAVMLLEQVYDADAFD, VDVALHLGIAYVKTGAVDRGTELLERSLADAPDN, VKVATVLGLTYVQVQKYDLAVPLLIKVAEANPIN, FNVRFRLGVALDNLGRFDEAIDSFKIALGLRPNE, and GKVHRAIAFSYEQMGRHEEALPHFKKANELDEGA. The segment at 41–112 is N-terminal domain (NTD); that stretch reads NDDIRQVYYR…LERSLADAPD (72 aa). Residues 113–217 form a C-terminal domain (CTD) region; sequence NVKVATVLGL…ANELDEGASV (105 aa).

Belongs to the magnetosome MamA family. Oligomerizes into high molecular weight complexes (at least 560 kDa). Forms round, 20 nm diameter complexes with a central cavity. Interacts with full-length Mms6. Probably binds MamC.

Its subcellular location is the magnetosome membrane. Functionally, probably forms a large homooligomer on which other magnetosome subunits assemble. Required for formation of functional magnetosomes from pre-existing vesicles, it has a dynamic location in the cell. This Paramagnetospirillum magneticum (strain ATCC 700264 / AMB-1) (Magnetospirillum magneticum) protein is Magnetosome protein MamA.